The chain runs to 239 residues: Transmembrane emp24 domain-containing protein 6 (239 aa).

Residues 1-21 form the signal peptide; that stretch reads MFPLLLVAELVVLSLVTSVKS. Over 22–200 the chain is Lumenal; it reads QETDPLHGSK…FFLLQSNYTY (179 aa). The GOLD domain maps to 53–138; it reads IECFWQFADQ…SIQVYLNFGV (86 aa). N-linked (GlcNAc...) asparagine glycans are attached at residues N156 and N197. Residues 201–223 traverse the membrane as a helical segment; that stretch reads VNWWSTAQSLAIVLSGALQLYFL. At 224–239 the chain is on the cytoplasmic side; that stretch reads KRLFTASTTDTKKPRC.

This sequence belongs to the EMP24/GP25L family.

The protein resides in the endoplasmic reticulum membrane. The chain is Transmembrane emp24 domain-containing protein 6 (Tmed6) from Mus musculus (Mouse).